The sequence spans 471 residues: 7-dehydrocholesterol reductase (471 aa).

The next 8 membrane-spanning stretches (helical) occupy residues 36–56 (LVSVIFLLLFAPFIVYYFIMA), 95–115 (LYALWVSFQVLLYSWLPDFCH), 144–164 (LQAWLITHFLWFVNAYLLSWF), 173–193 (WIPLLWCANILGYAVSTFAMI), 233–253 (LFFNGRPGIVAWTLINLSFAA), 262–282 (VTNSMILVNVLQAIYVLDFFW), 302–322 (LGWGDCVWLPYLYTLQGLYLV), and 327–347 (QLSTPNALGVLLLGLVGYYIF). Residues Lys-354, Arg-358, Leu-391, Trp-396, and 403 to 404 (NY) each bind NADP(+). Residues 416–436 (LACGGGHLLPYFYIIYMTILL) traverse the membrane as a helical segment. NADP(+)-binding positions include Asp-443, 447–451 (CANKY), and Tyr-458.

The protein belongs to the ERG4/ERG24 family. Interacts with DHCR24; this interaction regulates DHCR7 activity. Interacts with TMEM147. As to expression, highest expression is detected in liver, followed by kidney and brain.

The protein resides in the endoplasmic reticulum membrane. It catalyses the reaction cholesterol + NADP(+) = 7-dehydrocholesterol + NADPH + H(+). The enzyme catalyses 7-dehydrodesmosterol + NADPH + H(+) = desmosterol + NADP(+). The catalysed reaction is 5,6alpha-epoxy-5alpha-cholestan-3beta-ol + H2O = 5alpha-cholestane-3beta,5,6beta-triol. It carries out the reaction 5,6beta-epoxy-5beta-cholestan-3beta-ol + H2O = 5alpha-cholestane-3beta,5,6beta-triol. It functions in the pathway steroid biosynthesis; cholesterol biosynthesis. Oxidoreductase that catalyzes the last step of the cholesterol synthesis pathway, which transforms cholesta-5,7-dien-3beta-ol (7-dehydrocholesterol,7-DHC) into cholesterol by reducing the C7-C8 double bond of its sterol core. Can also metabolize cholesta-5,7,24-trien-3beta-ol (7-dehydrodemosterol, 7-DHD) to desmosterol, which is then metabolized by the Delta(24)-sterol reductase (DHCR24) to cholesterol. Modulates ferroptosis (a form of regulated cell death driven by iron-dependent lipid peroxidation) through the metabolic breakdown of the anti-ferroptotic metabolites 7-DHC and 7-DHD which, when accumulated, divert the propagation of peroxyl radical-mediated damage from phospholipid components to its sterol core, protecting plasma and mitochondrial membranes from phospholipid autoxidation. Functionally, component of the microsomal antiestrogen binding site (AEBS), a multiproteic complex at the ER membrane that consists of an association between cholestenol Delta-isomerase/EBP and DHCR7. This complex is responsible for cholesterol-5,6-epoxide hydrolase (ChEH) activity, which consists in the hydration of cholesterol-5,6-epoxides (5,6-EC) into cholestane-3beta,5alpha,6beta-triol (CT). The precise role of each component of this complex has not been described yet. The chain is 7-dehydrocholesterol reductase (Dhcr7) from Rattus norvegicus (Rat).